The sequence spans 156 residues: Transcription elongation factor GreA (156 aa).

It belongs to the GreA/GreB family.

Functionally, necessary for efficient RNA polymerase transcription elongation past template-encoded arresting sites. The arresting sites in DNA have the property of trapping a certain fraction of elongating RNA polymerases that pass through, resulting in locked ternary complexes. Cleavage of the nascent transcript by cleavage factors such as GreA or GreB allows the resumption of elongation from the new 3'terminus. GreA releases sequences of 2 to 3 nucleotides. The protein is Transcription elongation factor GreA of Thermomicrobium roseum (strain ATCC 27502 / DSM 5159 / P-2).